The primary structure comprises 111 residues: Inner membrane protein YdgC (111 aa).

Residues 1–26 (MGLVIKAALGALVVLLIGVLAKTKNY) lie on the Cytoplasmic side of the membrane. A helical membrane pass occupies residues 27-47 (YIAGLIPLFPTFALIAHYIVA). At 48–58 (SERGIEALRAT) the chain is on the periplasmic side. Residues 59-79 (IIFSMWSIIPYFVYLVSLWYF) form a helical membrane-spanning segment. At 80 to 87 (TGMMRLPA) the chain is on the cytoplasmic side. The chain crosses the membrane as a helical span at residues 88-108 (AFVGSVACWGISAWVLIICWI). The Periplasmic portion of the chain corresponds to 109–111 (KLH).

It to P.aeruginosa GlpM.

The protein resides in the cell inner membrane. The sequence is that of Inner membrane protein YdgC (ydgC) from Escherichia coli O157:H7.